Consider the following 182-residue polypeptide: Ribosomal RNA small subunit methyltransferase G (182 aa).

Residues Gly58, Phe63, 109–110, and Arg123 contribute to the S-adenosyl-L-methionine site; that span reads IE.

This sequence belongs to the methyltransferase superfamily. RNA methyltransferase RsmG family.

It is found in the cytoplasm. The enzyme catalyses guanosine(527) in 16S rRNA + S-adenosyl-L-methionine = N(7)-methylguanosine(527) in 16S rRNA + S-adenosyl-L-homocysteine. Functionally, specifically methylates the N7 position of guanine in position 527 of 16S rRNA. The polypeptide is Ribosomal RNA small subunit methyltransferase G (Campylobacter fetus subsp. fetus (strain 82-40)).